We begin with the raw amino-acid sequence, 346 residues long: Biotin synthase (346 aa).

In terms of domain architecture, Radical SAM core spans 38 to 256 (RQVQVSTLLS…IAVARIMMPT (219 aa)). Positions 53, 57, and 60 each coordinate [4Fe-4S] cluster. 4 residues coordinate [2Fe-2S] cluster: Cys-97, Cys-128, Cys-188, and Arg-260.

It belongs to the radical SAM superfamily. Biotin synthase family. In terms of assembly, homodimer. [4Fe-4S] cluster serves as cofactor. It depends on [2Fe-2S] cluster as a cofactor.

The catalysed reaction is (4R,5S)-dethiobiotin + (sulfur carrier)-SH + 2 reduced [2Fe-2S]-[ferredoxin] + 2 S-adenosyl-L-methionine = (sulfur carrier)-H + biotin + 2 5'-deoxyadenosine + 2 L-methionine + 2 oxidized [2Fe-2S]-[ferredoxin]. The protein operates within cofactor biosynthesis; biotin biosynthesis; biotin from 7,8-diaminononanoate: step 2/2. Its function is as follows. Catalyzes the conversion of dethiobiotin (DTB) to biotin by the insertion of a sulfur atom into dethiobiotin via a radical-based mechanism. In Escherichia fergusonii (strain ATCC 35469 / DSM 13698 / CCUG 18766 / IAM 14443 / JCM 21226 / LMG 7866 / NBRC 102419 / NCTC 12128 / CDC 0568-73), this protein is Biotin synthase.